Consider the following 143-residue polypeptide: 3-hydroxyacyl-[acyl-carrier-protein] dehydratase FabZ (143 aa).

Residue histidine 48 is part of the active site.

The protein belongs to the thioester dehydratase family. FabZ subfamily.

The protein resides in the cytoplasm. The catalysed reaction is a (3R)-hydroxyacyl-[ACP] = a (2E)-enoyl-[ACP] + H2O. In terms of biological role, involved in unsaturated fatty acids biosynthesis. Catalyzes the dehydration of short chain beta-hydroxyacyl-ACPs and long chain saturated and unsaturated beta-hydroxyacyl-ACPs. This is 3-hydroxyacyl-[acyl-carrier-protein] dehydratase FabZ from Roseiflexus sp. (strain RS-1).